The following is a 314-amino-acid chain: L-lactate dehydrogenase (314 aa).

NAD(+) contacts are provided by residues Val-16, Asp-37, Lys-42, Tyr-68, and 82–83 (GV). 2 residues coordinate substrate: Gln-85 and Arg-91. NAD(+) contacts are provided by residues Ser-104, 121 to 123 (ASN), and Thr-146. Position 123–126 (123–126 (NPVD)) interacts with substrate. Position 151–154 (151–154 (DTTR)) interacts with substrate. Residues Arg-156 and His-171 each contribute to the beta-D-fructose 1,6-bisphosphate site. The Proton acceptor role is filled by His-178. Residue Tyr-223 is modified to Phosphotyrosine. Residue Thr-232 coordinates substrate.

The protein belongs to the LDH/MDH superfamily. LDH family. In terms of assembly, homotetramer.

The protein localises to the cytoplasm. It catalyses the reaction (S)-lactate + NAD(+) = pyruvate + NADH + H(+). The protein operates within fermentation; pyruvate fermentation to lactate; (S)-lactate from pyruvate: step 1/1. Its activity is regulated as follows. Allosterically activated by fructose 1,6-bisphosphate (FBP). Functionally, catalyzes the conversion of lactate to pyruvate. The polypeptide is L-lactate dehydrogenase (Lactococcus lactis subsp. cremoris (strain MG1363)).